A 326-amino-acid polypeptide reads, in one-letter code: Pyruvate dehydrogenase E1 component subunit beta (326 aa).

Position 60 (Glu60) interacts with thiamine diphosphate. 4 residues coordinate K(+): Ile113, Ala161, Ile162, and Asn166.

In terms of assembly, heterodimer of an alpha and a beta chain. Thiamine diphosphate is required as a cofactor.

It is found in the plastid. It localises to the chloroplast. It catalyses the reaction N(6)-[(R)-lipoyl]-L-lysyl-[protein] + pyruvate + H(+) = N(6)-[(R)-S(8)-acetyldihydrolipoyl]-L-lysyl-[protein] + CO2. Its function is as follows. The pyruvate dehydrogenase complex catalyzes the overall conversion of pyruvate to acetyl-CoA and CO(2). It contains multiple copies of three enzymatic components: pyruvate dehydrogenase (E1), dihydrolipoamide acetyltransferase (E2) and lipoamide dehydrogenase (E3). The polypeptide is Pyruvate dehydrogenase E1 component subunit beta (pdhB) (Chaetosphaeridium globosum (Charophycean green alga)).